The primary structure comprises 461 residues: Vimentin (461 aa).

Composition is skewed to low complexity over residues 1–14 and 35–52; these read MNRT…SSSS and SSRQ…SYSV. The disordered stretch occupies residues 1–52; sequence MNRTTSRQTTSSSSYKRMFGGEGRPSVGMARSTLSSRQYSSPVRSSRMSYSV. The head stretch occupies residues 1 to 91; sequence MNRTTSRQTT…FALSDAINSE (91 aa). A coil 1A region spans residues 92 to 127; it reads FKANRTNEKAEMQHLNDRFASYIDKVRFLEQQNKIL. Residues 92 to 127 adopt a coiled-coil conformation; that stretch reads FKANRTNEKAEMQHLNDRFASYIDKVRFLEQQNKIL. The region spanning 99–407 is the IF rod domain; that stretch reads EKAEMQHLND…KLLEGEESRI (309 aa). The interval 128-149 is linker 1; it reads LAELEQLKGKGASRIGDLYEDE. Residues 150 to 241 adopt a coiled-coil conformation; it reads MRDLRRQVDQ…KLHDEEVAEL (92 aa). Positions 150–241 are coil 1B; the sequence is MRDLRRQVDQ…KLHDEEVAEL (92 aa). Residues 242-264 are linker 12; that stretch reads QAQIQDQHVQIDMDVAKPDLTAA. Positions 265–403 are coil 2; it reads LRDVRVQYET…ATYRKLLEGE (139 aa). A coiled-coil region spans residues 299-403; the sequence is NRNTDAIRQA…ATYRKLLEGE (105 aa). The tract at residues 404–461 is tail; sequence ESRITTPMPNFSSFNLRESMLEARPMIDNLSKKVVIKTIETRDGHVINESTQNHDDLE.

It belongs to the intermediate filament family. In terms of assembly, homomer assembled from elementary dimers. In terms of processing, one of the most prominent phosphoproteins in various cells of mesenchymal origin. Phosphorylation is enhanced during cell division, at which time vimentin filaments are significantly reorganized.

The protein localises to the cytoplasm. Its subcellular location is the cytoskeleton. The protein resides in the nucleus matrix. Its function is as follows. Vimentins are class-III intermediate filaments found in various non-epithelial cells, especially mesenchymal cells. Vimentin is attached to the nucleus, endoplasmic reticulum, and mitochondria, either laterally or terminally. This is Vimentin (vim) from Oncorhynchus mykiss (Rainbow trout).